Consider the following 209-residue polypeptide: Ribonuclease HII (209 aa).

Residues 18-209 form the RNase H type-2 domain; that stretch reads GLIAGVDEVG…FKPVKALLEG (192 aa). A divalent metal cation contacts are provided by Asp24, Glu25, and Asp116.

It belongs to the RNase HII family. The cofactor is Mn(2+). It depends on Mg(2+) as a cofactor.

The protein resides in the cytoplasm. It catalyses the reaction Endonucleolytic cleavage to 5'-phosphomonoester.. In terms of biological role, endonuclease that specifically degrades the RNA of RNA-DNA hybrids. This Shewanella putrefaciens (strain CN-32 / ATCC BAA-453) protein is Ribonuclease HII.